We begin with the raw amino-acid sequence, 330 residues long: MKKSFIHQQEEISFVKNTFTQYLKDKLEVVEVQGPILSKVGDGMQDNLSGVENPVSVKVLQIPDATYEVVHSLAKWKRHTLARFGFGEGEGLFVHMKALRPDEDSLDATHSVYVDQWDWEKVIPNGKRNIVYLKETVEKIYKAIRLTELAVEARYDIESILPKQITFIHTEELVERYPDLTSKERENAICKEFGAVFLIGIGGELPDGKPHDGRAPDYDDWTSESENGYKGLNGDILVWNESLGGAFELSSMGIRVDEETLRRQVEITGDEDRLELEWHKSLLNGLFPLTIGGGIGQSRMAMFLLRKRHIGEVQTSVWPQEVRDTYENIL.

The protein belongs to the class-II aminoacyl-tRNA synthetase family. AsnA subfamily.

The protein resides in the cytoplasm. The catalysed reaction is L-aspartate + NH4(+) + ATP = L-asparagine + AMP + diphosphate + H(+). It participates in amino-acid biosynthesis; L-asparagine biosynthesis; L-asparagine from L-aspartate (ammonia route): step 1/1. The chain is Aspartate--ammonia ligase from Streptococcus pneumoniae serotype 2 (strain D39 / NCTC 7466).